The sequence spans 297 residues: Phosphoribosylaminoimidazole-succinocarboxamide synthase (297 aa).

The protein belongs to the SAICAR synthetase family.

The catalysed reaction is 5-amino-1-(5-phospho-D-ribosyl)imidazole-4-carboxylate + L-aspartate + ATP = (2S)-2-[5-amino-1-(5-phospho-beta-D-ribosyl)imidazole-4-carboxamido]succinate + ADP + phosphate + 2 H(+). It participates in purine metabolism; IMP biosynthesis via de novo pathway; 5-amino-1-(5-phospho-D-ribosyl)imidazole-4-carboxamide from 5-amino-1-(5-phospho-D-ribosyl)imidazole-4-carboxylate: step 1/2. This is Phosphoribosylaminoimidazole-succinocarboxamide synthase from Mycobacteroides abscessus (strain ATCC 19977 / DSM 44196 / CCUG 20993 / CIP 104536 / JCM 13569 / NCTC 13031 / TMC 1543 / L948) (Mycobacterium abscessus).